The chain runs to 159 residues: Putative 4-hydroxy-4-methyl-2-oxoglutarate aldolase (159 aa).

Residues 78–81 and R100 contribute to the substrate site; that span reads GDVI. Residue D101 coordinates a divalent metal cation.

Belongs to the class II aldolase/RraA-like family. As to quaternary structure, homotrimer. Requires a divalent metal cation as cofactor.

The enzyme catalyses 4-hydroxy-4-methyl-2-oxoglutarate = 2 pyruvate. The catalysed reaction is oxaloacetate + H(+) = pyruvate + CO2. Its function is as follows. Catalyzes the aldol cleavage of 4-hydroxy-4-methyl-2-oxoglutarate (HMG) into 2 molecules of pyruvate. Also contains a secondary oxaloacetate (OAA) decarboxylase activity due to the common pyruvate enolate transition state formed following C-C bond cleavage in the retro-aldol and decarboxylation reactions. This Mycobacterium sp. (strain KMS) protein is Putative 4-hydroxy-4-methyl-2-oxoglutarate aldolase.